The following is a 159-amino-acid chain: Cell division protein SepF (159 aa).

The interval Asp23–Asn69 is disordered. Over residues Thr44–Pro64 the composition is skewed to low complexity.

It belongs to the SepF family. As to quaternary structure, homodimer. Interacts with FtsZ.

Its subcellular location is the cytoplasm. Its function is as follows. Cell division protein that is part of the divisome complex and is recruited early to the Z-ring. Probably stimulates Z-ring formation, perhaps through the cross-linking of FtsZ protofilaments. Its function overlaps with FtsA. The chain is Cell division protein SepF from Bifidobacterium longum (strain DJO10A).